A 387-amino-acid polypeptide reads, in one-letter code: S-adenosylmethionine synthase (387 aa).

Histidine 15 provides a ligand contact to ATP. Residue aspartate 17 participates in Mg(2+) binding. Glutamate 43 is a K(+) binding site. L-methionine is bound by residues glutamate 56 and glutamine 99. Positions 99-109 are flexible loop; the sequence is QSPDIAQGVNN. ATP is bound by residues 166–168, 232–233, aspartate 241, 247–248, alanine 264, and lysine 268; these read DAK, RF, and RK. Residue aspartate 241 coordinates L-methionine. L-methionine is bound at residue lysine 272.

The protein belongs to the AdoMet synthase family. As to quaternary structure, homotetramer; dimer of dimers. The cofactor is Mg(2+). It depends on K(+) as a cofactor.

It localises to the cytoplasm. It carries out the reaction L-methionine + ATP + H2O = S-adenosyl-L-methionine + phosphate + diphosphate. It participates in amino-acid biosynthesis; S-adenosyl-L-methionine biosynthesis; S-adenosyl-L-methionine from L-methionine: step 1/1. Functionally, catalyzes the formation of S-adenosylmethionine (AdoMet) from methionine and ATP. The overall synthetic reaction is composed of two sequential steps, AdoMet formation and the subsequent tripolyphosphate hydrolysis which occurs prior to release of AdoMet from the enzyme. This is S-adenosylmethionine synthase from Methylobacillus flagellatus (strain ATCC 51484 / DSM 6875 / VKM B-1610 / KT).